Consider the following 319-residue polypeptide: Vomeronasal type-1 receptor 96 (319 aa).

Topologically, residues 1–19 (MNKVNILPSDTNIKITLFS) are extracellular. Residues 20-40 (EVSVGISANSVLFFAHLCMFF) form a helical membrane-spanning segment. The Cytoplasmic portion of the chain corresponds to 41–49 (EENRSKPID). A helical transmembrane segment spans residues 50 to 70 (LCIAFLSLTQLMLLVTMGLIA). The Extracellular segment spans residues 71–93 (ADMFMSQGIWDSTTCRSIIYFHR). Cys85 and Cys172 are joined by a disulfide. The chain crosses the membrane as a helical span at residues 94–114 (LLRGFNLCAACLLHILWTFTL). Residues 115–134 (SPRSSCLTKFKHKSPHHISC) are Cytoplasmic-facing. A helical transmembrane segment spans residues 135–155 (AFFSLCVLYMLFSSHLFVLII). At 156–193 (ATSNLTSDHFMYVTQSCSILPMSYSRTTMFSLVMVTRE) the chain is on the extracellular side. N-linked (GlcNAc...) asparagine glycosylation occurs at Asn159. A helical transmembrane segment spans residues 194–214 (AFLISLMALFSGYMVTLLWRH). The Cytoplasmic portion of the chain corresponds to 215–238 (KKQVQHLHSTSLSSKSSPQQRATR). A helical membrane pass occupies residues 239–259 (TILLLMSFFVVLYILDIVIFQ). At 260–269 (SRTKFKDGSM) the chain is on the extracellular side. A helical transmembrane segment spans residues 270-290 (FYSLHIIVSHSYATISPFVFI). Over 291–319 (FSDKRIIKFLGSMSGRIINICLFSDGYGP) the chain is Cytoplasmic.

Belongs to the G-protein coupled receptor 1 family.

Its subcellular location is the cell membrane. Putative pheromone receptor implicated in the regulation of social as well as reproductive behavior. The sequence is that of Vomeronasal type-1 receptor 96 (Vom1r96) from Rattus norvegicus (Rat).